The chain runs to 176 residues: MAITGIFFGSDTGNTENIAKMIQKQLGKDVADVHDIAKSSKEDLEGYDILLLGIPTWYYGEAQCDWDDFFPTLEEIDFNGKLVALFGCGDQEDYAEYFCDALGTIRDIIEPRGATIVGHWPTAGYHFEASKGLADDDHFVGLAIDEDRQPELTAERVEKWVKQVSAELHLDDILNA.

The 162-residue stretch at 4 to 165 (TGIFFGSDTG…RVEKWVKQVS (162 aa)) folds into the Flavodoxin-like domain.

Belongs to the flavodoxin family. The cofactor is FMN.

Functionally, low-potential electron donor to a number of redox enzymes (Potential). Involved in the reactivation of inactive cob(II)alamin in methionine synthase. The sequence is that of Flavodoxin 1 (fldA) from Salmonella typhimurium (strain LT2 / SGSC1412 / ATCC 700720).